A 174-amino-acid polypeptide reads, in one-letter code: Crossover junction endodeoxyribonuclease RuvC (174 aa).

Residues aspartate 8, glutamate 69, and aspartate 141 contribute to the active site. Mg(2+) is bound by residues aspartate 8, glutamate 69, and aspartate 141.

This sequence belongs to the RuvC family. As to quaternary structure, homodimer which binds Holliday junction (HJ) DNA. The HJ becomes 2-fold symmetrical on binding to RuvC with unstacked arms; it has a different conformation from HJ DNA in complex with RuvA. In the full resolvosome a probable DNA-RuvA(4)-RuvB(12)-RuvC(2) complex forms which resolves the HJ. Requires Mg(2+) as cofactor.

The protein localises to the cytoplasm. It catalyses the reaction Endonucleolytic cleavage at a junction such as a reciprocal single-stranded crossover between two homologous DNA duplexes (Holliday junction).. The RuvA-RuvB-RuvC complex processes Holliday junction (HJ) DNA during genetic recombination and DNA repair. Endonuclease that resolves HJ intermediates. Cleaves cruciform DNA by making single-stranded nicks across the HJ at symmetrical positions within the homologous arms, yielding a 5'-phosphate and a 3'-hydroxyl group; requires a central core of homology in the junction. The consensus cleavage sequence is 5'-(A/T)TT(C/G)-3'. Cleavage occurs on the 3'-side of the TT dinucleotide at the point of strand exchange. HJ branch migration catalyzed by RuvA-RuvB allows RuvC to scan DNA until it finds its consensus sequence, where it cleaves and resolves the cruciform DNA. The sequence is that of Crossover junction endodeoxyribonuclease RuvC from Xanthomonas euvesicatoria pv. vesicatoria (strain 85-10) (Xanthomonas campestris pv. vesicatoria).